A 421-amino-acid polypeptide reads, in one-letter code: UDP-N-acetylglucosamine 1-carboxyvinyltransferase (421 aa).

22–23 (KN) contacts phosphoenolpyruvate. Arginine 91 provides a ligand contact to UDP-N-acetyl-alpha-D-glucosamine. The Proton donor role is filled by cysteine 115. Cysteine 115 bears the 2-(S-cysteinyl)pyruvic acid O-phosphothioketal mark. Residues 120-124 (RPIDL), aspartate 306, and isoleucine 328 contribute to the UDP-N-acetyl-alpha-D-glucosamine site.

This sequence belongs to the EPSP synthase family. MurA subfamily.

It is found in the cytoplasm. The catalysed reaction is phosphoenolpyruvate + UDP-N-acetyl-alpha-D-glucosamine = UDP-N-acetyl-3-O-(1-carboxyvinyl)-alpha-D-glucosamine + phosphate. It functions in the pathway cell wall biogenesis; peptidoglycan biosynthesis. Cell wall formation. Adds enolpyruvyl to UDP-N-acetylglucosamine. This chain is UDP-N-acetylglucosamine 1-carboxyvinyltransferase, found in Methylacidiphilum infernorum (isolate V4) (Methylokorus infernorum (strain V4)).